The following is a 60-amino-acid chain: Large ribosomal subunit protein bL32 (60 aa).

Positions 1 to 19 are enriched in basic residues; it reads MGVPKRKTSKGRRDKRRAH. Residues 1–20 are disordered; it reads MGVPKRKTSKGRRDKRRAHL.

This sequence belongs to the bacterial ribosomal protein bL32 family.

This is Large ribosomal subunit protein bL32 from Syntrophobacter fumaroxidans (strain DSM 10017 / MPOB).